Reading from the N-terminus, the 505-residue chain is MPLVEETSLLEDSSVTFPVVIIGNGPSGICLSYMLSGYRPYLSSEAIHPNTILNSKLEEARHLSIVDQDLEYLSEGLEGRSSNPVAVLFDTLLHPDADFGYDYPSVLHWKLEQHHYIPHVVLGKGPPGGAWHNMEGSMLTISFGSWMELPGLKFKDWVSSKRRSLKGDRVMPEEIARYYKHYVKVMGLQKNFRENTYITSVSRLYRDQDDDDIQDRDISTKHLQIEKSNFIKRNWEIRGYQRIADGSHVPFCLFAENVALATGTLDSPAHLEIEGEDFPFVFHSMPEFGAAINKGKLRGKVDPVLIVGSGLTAADAVLCAYNSNIPVIHVFRRRVTDPSLIFKQLPKKLYPEYHKVYHMMCTQSYSVDSNLLSDYTSFPEHRVLSFKSDMKCVLQSVSGLKKIFKLSAAVVLIGSHPNLSFLKDQGCYLGHKSSQPITCKGNPVEIDTYTYECIKEANLFALGPLVGDNFVRFLKGGALGVTRCLATRQKKKHLFVERGGGDGIA.

The protein belongs to the OKL38 family. It depends on NADPH as a cofactor. In terms of tissue distribution, ubiquitous. Expressed at higher levels in testis and ovary.

The protein resides in the midbody. Its function is as follows. Monooxygenase catalytic activity. May be involved in meiosis or the maturation of germ cells. The chain is Oxidative stress-induced growth inhibitor 2 from Homo sapiens (Human).